The primary structure comprises 117 residues: Nascent polypeptide-associated complex protein (117 aa).

The NAC-A/B domain occupies Pro-9–Val-77.

This sequence belongs to the NAC-alpha family. As to quaternary structure, homodimer. Interacts with the ribosome. Binds ribosomal RNA.

Contacts the emerging nascent chain on the ribosome. This Methanothermobacter marburgensis (strain ATCC BAA-927 / DSM 2133 / JCM 14651 / NBRC 100331 / OCM 82 / Marburg) (Methanobacterium thermoautotrophicum) protein is Nascent polypeptide-associated complex protein.